Here is a 103-residue protein sequence, read N- to C-terminus: Small ribosomal subunit protein uS10 (103 aa).

Belongs to the universal ribosomal protein uS10 family. Part of the 30S ribosomal subunit.

Involved in the binding of tRNA to the ribosomes. The protein is Small ribosomal subunit protein uS10 of Stenotrophomonas maltophilia (strain R551-3).